The primary structure comprises 435 residues: Protein SUPPRESSOR OF K(+) TRANSPORT GROWTH DEFECT 1 (435 aa).

Residues Glu-7 to Val-72 enclose the MIT domain. A disordered region spans residues Leu-73–Lys-113. Basic and acidic residues predominate over residues Lys-95–Lys-113. ATP is bound at residue Gly-172–Ser-179.

It belongs to the AAA ATPase family. In terms of assembly, monomer or homodimer (in nucleotide-free form). Decamer, dodecamer or tetradecamer of two stacked respective homooligomeric rings (when bound to ATP); the dodecameric form seems to be predominant. Interacts with members of the ESCRT-III subcomplex such as LIP5, VPS60-1, VPS2.1, VPS20.1, VPS20.2, VPS24-1, VPS32.1, VPS32.2, CHMP1A and VPS24. Binds to PROS/At4g24370. As to expression, mostly expressed in leaves, to a lower extent in seeds, and barely in roots and flowers (at protein level). Particularly expressed in trichomes.

Its subcellular location is the cytoplasm. The protein resides in the nucleus. It is found in the endosome. The protein localises to the multivesicular body membrane. It localises to the prevacuolar compartment membrane. The catalysed reaction is ATP + H2O = ADP + phosphate + H(+). With respect to regulation, activated by LIP5 and PROS. Functionally, involved in the transport of biosynthetic membrane proteins from the prevacuolar/endosomal compartment to the vacuole. Required for multivesicular body (MVB) protein sorting. Catalyzes the ATP-dependent dissociation of class E VPS proteins from endosomal membranes, such as the disassembly of the ESCRT-III complex. May also regulate cell cycle. Required during seed development for the formation of mucilage in seed coat and testa. Involved in the maintenance of Na(+)/K(+) homeostasis under salt stress. Required for cell expansion. The sequence is that of Protein SUPPRESSOR OF K(+) TRANSPORT GROWTH DEFECT 1 from Arabidopsis thaliana (Mouse-ear cress).